Here is a 263-residue protein sequence, read N- to C-terminus: Interleukin-15 receptor subunit alpha (263 aa).

Positions 1–32 (MASPQLRGYGVQAIPVLLLLLLLLLLPLRVTP) are cleaved as a signal peptide. Over 33-205 (GTTCPPPVSI…ISPHSSKMTK (173 aa)) the chain is Extracellular. The region spanning 34-98 (TTCPPPVSIE…WTTPSLKCIR (65 aa)) is the Sushi domain. Cystine bridges form between Cys36/Cys78 and Cys62/Cys96. Residue Asn51 is glycosylated (N-linked (GlcNAc...) asparagine). The span at 113–135 (TPKVTSQPESPSPSAKEPEAFSP) shows a compositional bias: low complexity. Positions 113-178 (TPKVTSQPES…HKSSRAPSLA (66 aa)) are disordered. The segment covering 136–145 (KSDTAMTTET) has biased composition (polar residues). Positions 154 to 169 (TPSQTTSAGTTGTGSH) are enriched in low complexity. The chain crosses the membrane as a helical span at residues 206 to 226 (VAISTSVLLVGAGVVMAFLAW). Over 227–263 (YIKSRQPSQPCRVEVETMETVPMTVRASSKEDEDTGA) the chain is Cytoplasmic.

The interleukin-15 receptor IL15R is a heterotrimer of IL15RA, IL2RB and IL2RG. IL15RA also self-associates. Interacts with SYK. Post-translationally, N-glycosylated and O-glycosylated. In terms of processing, a soluble form (sIL-15RA) arises from proteolytic shedding of the membrane-anchored receptor. It also binds IL15 and thus interferes with IL15 binding to the membrane receptor. As to expression, widely expressed.

It localises to the membrane. The protein localises to the nucleus membrane. The protein resides in the cell surface. Its subcellular location is the secreted. It is found in the extracellular space. High-affinity receptor for interleukin-15. Can signal both in cis and trans where IL15R from one subset of cells presents IL15 to neighboring IL2RG-expressing cells. In neutrophils, binds and activates kinase SYK in response to IL15 stimulation. In neutrophils, required for IL15-induced phagocytosis in a SYK-dependent manner. The sequence is that of Interleukin-15 receptor subunit alpha (Il15ra) from Mus musculus (Mouse).